We begin with the raw amino-acid sequence, 2120 residues long: Alpha-tectorin (2120 aa).

Residues 1 to 24 form the signal peptide; that stretch reads MNTRSLLSAWAALLVVTVRHRAHA. N-linked (GlcNAc...) asparagine glycosylation is found at Asn34, Asn215, Asn258, Asn277, Asn445, and Asn496. The region spanning 98–252 is the NIDO domain; sequence PFCGDVANGI…GRWAFKIDGR (155 aa). The region spanning 260-312 is the VWFC domain; the sequence is SLRGQFLHQGEIFWENSNCSTKCRCLDFNNEIFCQEMLAPFETVEPKIKFFQC. The region spanning 317-490 is the VWFD 1 domain; sequence TACVVFGDPH…RVPHPERKCS (174 aa). Disulfide bonds link Cys319–Cys451 and Cys341–Cys489. Positions 578-620 constitute a TIL 1 domain; the sequence is PGHSHYSGCASGCPATCSDLTAPLRCTAPCPEGCECDDGHVLS. N-linked (GlcNAc...) asparagine glycans are attached at residues Asn666, Asn792, Asn822, Asn834, Asn877, Asn899, Asn907, and Asn928. Residues 690–865 enclose the VWFD 2 domain; that stretch reads GLCSVGQNQV…SWTTFDEICN (176 aa). Residues Cys692 and Cys828 are joined by a disulfide bond. The region spanning 963–1013 is the TIL 2 domain; the sequence is CPENSHFEECMSCVETCETLATGCCMDTCTEGCQCDEGFALRSPCVPRGEC. Residues Asn1025, Asn1041, Asn1207, and Asn1337 are each glycosylated (N-linked (GlcNAc...) asparagine). Residues 1066–1250 form the VWFD 3 domain; the sequence is ASCIVSGYGH…SWAKRDTFCR (185 aa). 2 disulfide bridges follow: Cys1068–Cys1213 and Cys1090–Cys1249. The TIL 3 domain maps to 1345-1398; the sequence is CPPNSHYESCVSLCQPRCAAIRLKSDCGHYCVEGCQCDPGYVLNGKSCILPQNC. Residues 1458–1633 enclose the VWFD 4 domain; that stretch reads SFCLAAGGGV…KTNGMQKSCN (176 aa). 7 disulfides stabilise this stretch: Cys1460–Cys1594, Cys1482–Cys1632, Cys1684–Cys1742, Cys1708–Cys1751, Cys1753–Cys1785, Cys1773–Cys1865, and Cys1804–Cys1824. N-linked (GlcNAc...) asparagine glycans are attached at residues Asn1511, Asn1537, Asn1723, Asn1739, Asn1761, Asn1818, Asn1831, Asn1847, Asn1887, and Asn1906. Positions 1772-2026 constitute a ZP domain; sequence TCKAAQMEVS…YSCKINCPQH (255 aa). Intrachain disulfides connect Cys1947/Cys2007, Cys1968/Cys2023, and Cys2012/Cys2019. Asn2058 carries the GPI-anchor amidated asparagine lipid modification. Residues 2059-2120 constitute a propeptide, removed in mature form; the sequence is GGCEQICTSQ…LWAALHDPTS (62 aa).

As to quaternary structure, may form homomeric filament after self-association or heteromeric filament after association with beta-tectorin. At least 3 products of tectorin seem to exist: HMM, MMM and LMM. They may be generated by active processing or the result of proteolysis occurring between intrachain disulfide bonds. Post-translationally, the presence of a hydrophobic C-terminus preceded by a potential cleavage site strongly suggests that tectorins are synthesized as glycosylphosphatidylinositol-linked, membrane-bound precursors. Tectorins are targeted to the apical surface of the inner ear epithelia by the lipid and proteolytically released into the extracellular compartment. As to expression, expressed in the inner ear.

The protein resides in the cell membrane. It is found in the secreted. It localises to the extracellular space. The protein localises to the extracellular matrix. Functionally, one of the major non-collagenous components of the tectorial membrane. The tectorial membrane is an extracellular matrix of the inner ear that covers the neuroepithelium of the cochlea and contacts the stereocilia bundles of specialized sensory hair cells. Sound induces movement of these hair cells relative to the tectorial membrane, deflects the stereocilia and leads to fluctuations in hair-cell membrane potential, transducing sound into electrical signals. This is Alpha-tectorin (TECTA) from Gallus gallus (Chicken).